A 304-amino-acid chain; its full sequence is Glutaminase (304 aa).

7 residues coordinate substrate: serine 63, asparagine 113, glutamate 157, asparagine 164, tyrosine 188, tyrosine 240, and valine 258.

The protein belongs to the glutaminase family. As to quaternary structure, homotetramer.

It carries out the reaction L-glutamine + H2O = L-glutamate + NH4(+). In Chromobacterium violaceum (strain ATCC 12472 / DSM 30191 / JCM 1249 / CCUG 213 / NBRC 12614 / NCIMB 9131 / NCTC 9757 / MK), this protein is Glutaminase.